A 417-amino-acid polypeptide reads, in one-letter code: Serine hydroxymethyltransferase 1 (417 aa).

(6S)-5,6,7,8-tetrahydrofolate-binding positions include Leu121 and 125–127 (GHL). Lys230 carries the post-translational modification N6-(pyridoxal phosphate)lysine. 355 to 357 (SPF) serves as a coordination point for (6S)-5,6,7,8-tetrahydrofolate.

Belongs to the SHMT family. Homodimer. The cofactor is pyridoxal 5'-phosphate.

It localises to the cytoplasm. The catalysed reaction is (6R)-5,10-methylene-5,6,7,8-tetrahydrofolate + glycine + H2O = (6S)-5,6,7,8-tetrahydrofolate + L-serine. The protein operates within one-carbon metabolism; tetrahydrofolate interconversion. It functions in the pathway amino-acid biosynthesis; glycine biosynthesis; glycine from L-serine: step 1/1. In terms of biological role, catalyzes the reversible interconversion of serine and glycine with tetrahydrofolate (THF) serving as the one-carbon carrier. This reaction serves as the major source of one-carbon groups required for the biosynthesis of purines, thymidylate, methionine, and other important biomolecules. Also exhibits THF-independent aldolase activity toward beta-hydroxyamino acids, producing glycine and aldehydes, via a retro-aldol mechanism. The sequence is that of Serine hydroxymethyltransferase 1 from Pseudomonas aeruginosa (strain ATCC 15692 / DSM 22644 / CIP 104116 / JCM 14847 / LMG 12228 / 1C / PRS 101 / PAO1).